The primary structure comprises 478 residues: Sugar transporter ERD6-like 15 (478 aa).

The next 12 helical transmembrane spans lie at 31 to 51 (FVLAFIVGSCGAFAFGCIIGY), 67 to 87 (IADYSLFGSILTVGLILGALI), 106 to 126 (ILFVIGWFAIAFAKGVWLLDL), 129 to 149 (LLQGISIGISVYLGPVYITEI), 161 to 181 (FAQLFAGVGISVFYALGTIVA), 185 to 205 (LAILGCIPSLMVLPLLFFIPE), 267 to 287 (AFSLTIGVVLIALPQLGGLNG), 305 to 325 (FGFISTSVVQMFGGILGTVLV), 333 to 353 (LLLVSQAGMFLGCLTTAISFF), 366 to 386 (VLALFSVMVYFGSYGSGMGSI), 406 to 426 (MCNLVSSISAWLVAYSFSYLL), and 432 to 452 (GTFLMFATVAGLGFVFIAKLV).

The protein belongs to the major facilitator superfamily. Sugar transporter (TC 2.A.1.1) family.

It is found in the membrane. Sugar transporter. This Arabidopsis thaliana (Mouse-ear cress) protein is Sugar transporter ERD6-like 15.